The chain runs to 85 residues: MDPKKIARINELAKKKKTEGLTPEEKVEQAKLREEYIEGYRRAVRHHIEGIKIVDEEGNDVTPEKLRQVQREKGLHGRSLDDPNS.

The tract at residues Thr-62–Ser-85 is disordered.

It belongs to the UPF0291 family.

It localises to the cytoplasm. The protein is UPF0291 protein SP_1473 of Streptococcus pneumoniae serotype 4 (strain ATCC BAA-334 / TIGR4).